The following is an 86-amino-acid chain: Large ribosomal subunit protein bL31 (86 aa).

The tract at residues 66-86 (GMGSADSATSQETKEAKESDK) is disordered. Residues 77–86 (ETKEAKESDK) are compositionally biased toward basic and acidic residues.

This sequence belongs to the bacterial ribosomal protein bL31 family. Type A subfamily. As to quaternary structure, part of the 50S ribosomal subunit.

Functionally, binds the 23S rRNA. The polypeptide is Large ribosomal subunit protein bL31 (Prochlorococcus marinus (strain MIT 9515)).